The primary structure comprises 183 residues: MLQALLIFVLQIIYVPTLTIRTILLVKNQTRSAAGVGLLEGAIYIVSLGIVFQDLSNWMNIVAYVIGFSAGLLLGGYIENKLAIGYITYQVSLLDRCNELVNELRHFGFGVTVFEGEGINSIRYRLDIVAKRSREKELLEIINEIAPKAFMSSYEIRSFKGGYLTKAMKKRALLKKKKDEHAL.

The next 3 helical transmembrane spans lie at 6 to 26 (LIFVLQIIYVPTLTIRTILLV), 32 to 52 (SAAGVGLLEGAIYIVSLGIVF), and 58 to 78 (WMNIVAYVIGFSAGLLLGGYI).

Belongs to the UPF0316 family.

It localises to the cell membrane. In Bacillus mycoides (strain KBAB4) (Bacillus weihenstephanensis), this protein is UPF0316 protein BcerKBAB4_3093.